Here is a 317-residue protein sequence, read N- to C-terminus: Glutathione synthetase (317 aa).

The 187-residue stretch at glutamate 125–aspartate 311 folds into the ATP-grasp domain. Residue threonine 152 to glycine 208 coordinates ATP. Residues glutamate 282 and asparagine 284 each contribute to the Mg(2+) site.

It belongs to the prokaryotic GSH synthase family. Mg(2+) is required as a cofactor. Requires Mn(2+) as cofactor.

The catalysed reaction is gamma-L-glutamyl-L-cysteine + glycine + ATP = glutathione + ADP + phosphate + H(+). It participates in sulfur metabolism; glutathione biosynthesis; glutathione from L-cysteine and L-glutamate: step 2/2. In Pseudomonas putida (strain ATCC 47054 / DSM 6125 / CFBP 8728 / NCIMB 11950 / KT2440), this protein is Glutathione synthetase.